A 366-amino-acid chain; its full sequence is Putative type II methyltransferase M.MjaORF1200P (366 aa).

The region spanning 5-366 (LKFIDLFCGC…IARVIKENLK (362 aa)) is the SAM-dependent MTase C5-type domain. The active site involves cysteine 133.

The protein belongs to the class I-like SAM-binding methyltransferase superfamily. C5-methyltransferase family.

It catalyses the reaction a 2'-deoxycytidine in DNA + S-adenosyl-L-methionine = a 5-methyl-2'-deoxycytidine in DNA + S-adenosyl-L-homocysteine + H(+). Its function is as follows. A putative methylase that probably protects DNA from cleavage by the MjaORF1200P endonuclease. This chain is Putative type II methyltransferase M.MjaORF1200P, found in Methanocaldococcus jannaschii (strain ATCC 43067 / DSM 2661 / JAL-1 / JCM 10045 / NBRC 100440) (Methanococcus jannaschii).